An 82-amino-acid chain; its full sequence is Delta-ctenitoxin-Pn2a (82 aa).

Positions 1-17 (MKVAILFLSILVLAVAS) are cleaved as a signal peptide. Positions 18 to 34 (ESIEESRDDFAVEELGR) are excised as a propeptide. Intrachain disulfides connect Cys37–Cys51, Cys44–Cys57, Cys48–Cys80, Cys50–Cys65, and Cys59–Cys63.

The protein belongs to the neurotoxin 03 (Tx2) family. 06 subfamily. Expressed by the venom gland.

The protein resides in the secreted. Toxin that is known to potentiate erectile function. It binds voltage-dependently to sodium channels (Nav), inhibits the inactivation of the activated channels and decreases the peak inward current. The toxin delays inactivation of Nav1.2/SCN2A, Nav1.3/SCN3A, Nav1.4/SCN4A and Nav1.8/SCN10A, slows the inactivation process and decreases the sodium peak amplitude of Nav1.5/SCN5A and Nav1.6/SCN8A. In vivo, it enhances erectile function by inducing the release of nictric oxide (NO): it slows the sodium current, leading to depolarization, which leads to an increase in calcium influx (probably via activation of N-type calcium channels) which in turn activates neuronal NO synthase (nNOS/NOS1), inducing nitric oxide (NO) production. In a final step, NO activates soluble guanylate cyclase (GUCY1A1/GUCY1B1) which in turn increases cGMP formation, resulting in penile erection. It is noteworthy that the toxin does not provoke erection by inhibiting phosphodiesterase type 5 (PDE5A), an enzyme that hydrolysis cGMP. In vivo, it also causes scratching, lacrimation, hypersalivation, sweating and agitation followed by spastic paralysis of the anterior and posterior extremities and death at dose levels of 0.79 mg/mouse. It is insecticidal to the larval and adult forms of the house fly. The toxin also improves cavernosal relaxation in different models where erectile dysfunction is observed, such as deoxycorticosterone-acetate (DOCA)-salt hypertensive rats, mice models for type-1 diabetes, as well as elderly rats. In Phoneutria nigriventer (Brazilian armed spider), this protein is Delta-ctenitoxin-Pn2a.